We begin with the raw amino-acid sequence, 194 residues long: High mobility group protein B4 (194 aa).

DNA-binding regions (HMG box) lie at residues 9–79 and 93–161; these read PKAN…MNYF and PRRP…SVYR.

The protein belongs to the HMGB family.

It localises to the nucleus. It is found in the chromosome. The protein is High mobility group protein B4 (HMGB4) of Bos taurus (Bovine).